The sequence spans 1006 residues: Probable protein phosphatase DDB_G0279461 (1006 aa).

Over residues 1–12 the composition is skewed to polar residues; sequence MMVPSLSTSISS. Disordered regions lie at residues 1 to 119, 146 to 188, 214 to 269, 312 to 387, 459 to 513, 525 to 563, and 604 to 642; these read MMVP…NNKE, SHAS…RSNS, SSED…NGIR, DAES…PPNQ, NINN…NNIQ, DYNI…NSKF, and GSIP…TSAS. The span at 59–69 shows a compositional bias: acidic residues; sequence NEEEGTADNEL. Residues 65–122 are a coiled coil; the sequence is ADNELESLMSLVNDNNNNNNNTSGIDDDNNNDIDDNNNNNNNNNNNNNNNNNNKEGLN. Residues 77–88 show a composition bias toward low complexity; the sequence is NDNNNNNNNTSG. Residues 89 to 99 are compositionally biased toward acidic residues; sequence IDDDNNNDIDD. A compositionally biased stretch (low complexity) spans 100–117; sequence NNNNNNNNNNNNNNNNNN. The span at 146 to 158 shows a compositional bias: polar residues; sequence SHASVSNQSSNGS. Composition is skewed to low complexity over residues 220–234, 244–254, and 316–387; these read SCHN…NKNN, NINNNNNNNCN, and NYNN…PPNQ. A coiled-coil region spans residues 450–516; it reads KIDNLNKNIN…NNNNNIQDIQ (67 aa). The span at 466-481 shows a compositional bias: polar residues; sequence TDSQQPLPSIDVNFSH. Residues 482–511 are compositionally biased toward low complexity; it reads NNNNNNNDNDNNNNNNNNNNNNNNNNNNNN. The segment covering 525 to 538 has biased composition (polar residues); the sequence is DYNIQEGNDINNDN. Composition is skewed to low complexity over residues 552 to 561 and 613 to 639; these read SSNNNNNNNS and NNNN…TTTT. The region spanning 744–1005 is the PPM-type phosphatase domain; sequence DINKRGLKRA…DNISIIVVTL (262 aa). Residues Asp784, Gly785, Asp956, and Asp996 each coordinate Mn(2+).

It in the C-terminal section; belongs to the PP2C family. Mg(2+) is required as a cofactor. Requires Mn(2+) as cofactor.

It carries out the reaction O-phospho-L-seryl-[protein] + H2O = L-seryl-[protein] + phosphate. It catalyses the reaction O-phospho-L-threonyl-[protein] + H2O = L-threonyl-[protein] + phosphate. This chain is Probable protein phosphatase DDB_G0279461, found in Dictyostelium discoideum (Social amoeba).